The sequence spans 528 residues: MSTVNVQIGLHELLNGSNAQIQLSVPQLVEKVLMRNEGKLTSTGAVSASTGKYTGRSPKDKFIVKEASVADKIAWGAVNQPISEEHFNKLYTKVLEYLKEKEELFVFKGFAGADRNYRLPIQVINEYAWHNLFVHQLFIRPTEEELTTHESGFTIVSAPNFKADPAVDGTNSEAFIMVSFEKRIVLIGGTEYAGEMKKSIFSIMNFLLPEQDILSMHCSANVGEEGDVALFFGLSGTGKTTLSADPNRKLIGDDEHGWSDNGVFNIEGGCYAKCVNLSHEKEPQIFDAIKFGSVLENVIINNQTRIADYNDTTLTENTRAAYPMHAIDNIVLPSVAGHPNTIIFLTADASGVLPPISKLSKEQAMYHFLSGYTSKLAGTERGVTSPQATFSTCFGSPFLPLDASRYAEMLGEKIEKHDAKVFLVNTGWTGGEYGVGKRMNLGYTRAMIQAALSGELAKTETAKHDIFGLEVPLHVPGVPDEVLMPEQTWADKAAYKAKAIELANEFKENFKKFESVSEDIINLGGPIA.

Positions 56, 192, and 198 each coordinate substrate. ATP contacts are provided by residues lysine 198, histidine 217, and 233-241 (GLSGTGKTT). Positions 198 and 217 each coordinate Mn(2+). Aspartate 254 contacts Mn(2+). The ATP site is built by glutamate 282, arginine 319, and threonine 444. Arginine 319 provides a ligand contact to substrate.

Belongs to the phosphoenolpyruvate carboxykinase (ATP) family. The cofactor is Mn(2+).

The protein localises to the cytoplasm. It carries out the reaction oxaloacetate + ATP = phosphoenolpyruvate + ADP + CO2. Its pathway is carbohydrate biosynthesis; gluconeogenesis. In terms of biological role, involved in the gluconeogenesis. Catalyzes the conversion of oxaloacetate (OAA) to phosphoenolpyruvate (PEP) through direct phosphoryl transfer between the nucleoside triphosphate and OAA. This chain is Phosphoenolpyruvate carboxykinase (ATP), found in Bacillus cereus (strain G9842).